The following is a 279-amino-acid chain: Dihydropteroate synthase type-1 (279 aa).

Residues 1–258 enclose the Pterin-binding domain; that stretch reads MVTVFGILNL…APGDLRSAIT (258 aa). Residue Asn-9 participates in Mg(2+) binding. Residues Asp-82, Asn-101, Asp-173, Lys-212, and 246 to 248 each bind (7,8-dihydropterin-6-yl)methyl diphosphate; that span reads RTH.

It belongs to the DHPS family. Homodimer or homotrimer. It depends on Mg(2+) as a cofactor.

It catalyses the reaction (7,8-dihydropterin-6-yl)methyl diphosphate + 4-aminobenzoate = 7,8-dihydropteroate + diphosphate. The protein operates within cofactor biosynthesis; tetrahydrofolate biosynthesis; 7,8-dihydrofolate from 2-amino-4-hydroxy-6-hydroxymethyl-7,8-dihydropteridine diphosphate and 4-aminobenzoate: step 1/2. In terms of biological role, catalyzes the condensation of para-aminobenzoate (pABA) with 6-hydroxymethyl-7,8-dihydropterin diphosphate (DHPt-PP) to form 7,8-dihydropteroate (H2Pte), the immediate precursor of folate derivatives. The polypeptide is Dihydropteroate synthase type-1 (sulI) (Corynebacterium glutamicum (Brevibacterium saccharolyticum)).